Consider the following 72-residue polypeptide: Large ribosomal subunit protein bL28 (72 aa).

Belongs to the bacterial ribosomal protein bL28 family.

This Chlorobium chlorochromatii (strain CaD3) protein is Large ribosomal subunit protein bL28.